The sequence spans 417 residues: Phosphoglycerate kinase 1 (417 aa).

Position 2 is an N-acetylserine (Ser-2). Phosphoserine is present on residues Ser-2 and Ser-4. Lys-6 carries the post-translational modification N6-succinyllysine. Position 11 is an N6-acetyllysine (Lys-11). (2R)-3-phosphoglycerate is bound by residues Val-23, Asp-24, Phe-25, Asn-26, Gln-38, and Arg-39. Residues Gln-38–Ala-43 form a mitochondrial targeting region exposed following cis-trans isomerization by PIN1 and recognized by the TOM complex for mitochondrial translocation of the protein region. The residue at position 48 (Lys-48) is an N6-acetyllysine; alternate. At Lys-48 the chain carries N6-succinyllysine; alternate. The (2R)-3-phosphoglycerate site is built by Ser-62, His-63, Gly-65, and Arg-66. N6-acetyllysine is present on Lys-75. Tyr-76 bears the Phosphotyrosine mark. Lys-86 and Lys-91 each carry N6-acetyllysine. Lys-97 is subject to N6-acetyllysine; alternate. The residue at position 97 (Lys-97) is an N6-(2-hydroxyisobutyryl)lysine; alternate. (2R)-3-phosphoglycerate contacts are provided by Leu-122 and Arg-123. Lys-131 bears the N6-acetyllysine; alternate mark. Lys-131 is subject to N6-malonyllysine; alternate. Residue Lys-146 is modified to N6-acetyllysine. (2R)-3-phosphoglycerate is bound by residues His-170 and Arg-171. An N6-succinyllysine modification is found at Lys-191. Tyr-196 carries the phosphotyrosine modification. Lys-199 carries the post-translational modification N6-acetyllysine. Residue Ser-203 is modified to Phosphoserine. Residue Gly-214 coordinates ADP. Gly-214 contacts CDP. Residues Ala-215 and Lys-216 each contribute to the AMP site. Ala-215 is an ATP binding site. Ala-215 provides a ligand contact to Mg(2+). An N6-(2-hydroxyisobutyryl)lysine modification is found at Lys-216. Mg(2+)-binding residues include Ala-218 and Asp-219. Asp-219 lines the CDP pocket. Lys-220 is a binding site for AMP. Residue Lys-220 coordinates ATP. Lys-220 carries the N6-(2-hydroxyisobutyryl)lysine modification. An ADP-binding site is contributed by Gly-238. Gly-238 serves as a coordination point for CDP. An AMP-binding site is contributed by Gly-239. Gly-239 contributes to the ATP binding site. Lys-267 and Lys-291 each carry N6-acetyllysine. Gly-313 contributes to the AMP binding site. Gly-313 contributes to the ATP binding site. The residue at position 323 (Lys-323) is an N6-(2-hydroxyisobutyryl)lysine. Residues Gly-338, Val-340, and Phe-343 each contribute to the CDP site. Phe-343 contributes to the ADP binding site. An AMP-binding site is contributed by Glu-344. Glu-344 provides a ligand contact to ATP. Position 354 is a phosphoserine (Ser-354). Lys-361 carries the post-translational modification N6-acetyllysine. Positions 375 and 376 each coordinate ATP. Position 375 (Asp-375) interacts with Mg(2+).

The protein belongs to the phosphoglycerate kinase family. Monomer. Interacts with kinase MAPK1/ERK2; the interaction is direct, occurs under hypoxic conditions, and promotes its interaction with PIN1. Interacts with peptidyl-prolyl cis-trans isomerase PIN1; the interaction is direct, occurs under hypoxic conditions, and targets the protein to the mitochondrion by promoting interactions with the TOM complex. Interacts with mitochondrial circRNA mcPGK1 (via its 2nd stem-loop); the interaction is direct and targets the protein to the mitochondrion by promoting interactions with the TOM complex. Interacts with pyruvate dehydrogenase kinase PDK1; the interaction is direct, occurs under hypoxic conditions and leads to PDK1-mediated inhibition of pyruvate dehydrogenase complex activity. Mg(2+) is required as a cofactor. Post-translationally, phosphorylated at Ser-203 by MAPK1/ERK2 under hypoxic conditions, which promotes its mitochondrial targeting.

Its subcellular location is the cytoplasm. The protein localises to the cytosol. It localises to the mitochondrion matrix. The catalysed reaction is (2R)-3-phosphoglycerate + ATP = (2R)-3-phospho-glyceroyl phosphate + ADP. It catalyses the reaction L-seryl-[protein] + ATP = O-phospho-L-seryl-[protein] + ADP + H(+). It participates in carbohydrate degradation; glycolysis; pyruvate from D-glyceraldehyde 3-phosphate: step 2/5. In terms of biological role, catalyzes one of the two ATP producing reactions in the glycolytic pathway via the reversible conversion of 1,3-diphosphoglycerate to 3-phosphoglycerate. Both L- and D- forms of purine and pyrimidine nucleotides can be used as substrates, but the activity is much lower on pyrimidines. In addition to its role as a glycolytic enzyme, it seems that PGK-1 acts as a polymerase alpha cofactor protein (primer recognition protein). Acts as a protein kinase when localized to the mitochondrion where it phosphorylates pyruvate dehydrogenase kinase PDK1 to inhibit pyruvate dehydrogenase complex activity and suppress the formation of acetyl-coenzyme A from pyruvate, and consequently inhibit oxidative phosphorylation and promote glycolysis. May play a role in sperm motility. In Rattus norvegicus (Rat), this protein is Phosphoglycerate kinase 1 (Pgk1).